Reading from the N-terminus, the 1323-residue chain is Tetratricopeptide repeat protein 21 homolog (1323 aa).

TPR repeat units lie at residues 56-89 (VPLA…QNFS), 411-444 (ESPF…LIEM), 580-613 (SLYH…PKKE), 667-700 (HQLV…QSNF), 702-735 (LSRI…EPTP), 736-768 (GSYS…QSKD), 770-802 (QLAE…YKDK), 804-835 (MRLK…EPEP), 845-878 (IQFL…HNKI), 892-925 (ARIC…YETD), 927-959 (KSNL…DPHN), 961-993 (EANL…NPLH), 995-1027 (HALF…NPRC), 1031-1064 (AGYS…PNVV), 1203-1236 (EKCW…NCNS), 1238-1270 (RAFE…TNQK), and 1272-1305 (CSFG…NPQY).

The protein belongs to the TTC21 family.

The sequence is that of Tetratricopeptide repeat protein 21 homolog from Caenorhabditis briggsae.